We begin with the raw amino-acid sequence, 206 residues long: 2,3-bisphosphoglycerate-dependent phosphoglycerate mutase (206 aa).

Substrate contacts are provided by residues 9–16, 22–23, arginine 61, 88–91, lysine 99, 115–116, and 159–160; these read RHGQSEWN, TG, ERDY, RR, and GN. Histidine 10 (tele-phosphohistidine intermediate) is an active-site residue. The active-site Proton donor/acceptor is glutamate 88.

Belongs to the phosphoglycerate mutase family. BPG-dependent PGAM subfamily. Homodimer.

It catalyses the reaction (2R)-2-phosphoglycerate = (2R)-3-phosphoglycerate. It participates in carbohydrate degradation; glycolysis; pyruvate from D-glyceraldehyde 3-phosphate: step 3/5. Functionally, catalyzes the interconversion of 2-phosphoglycerate and 3-phosphoglycerate. In Brucella abortus (strain S19), this protein is 2,3-bisphosphoglycerate-dependent phosphoglycerate mutase.